A 315-amino-acid polypeptide reads, in one-letter code: Calcium homeostasis modulator protein 6 (315 aa).

At 1–21 the chain is on the cytoplasmic side; that stretch reads MEKFRAVLDLHVKHHSALGYG. A helical membrane pass occupies residues 22-37; it reads LVTLLTAGGERIFSAV. At 38–46 the chain is on the extracellular side; it reads AFQCPCSAA. Cystine bridges form between cysteine 41-cysteine 126, cysteine 43-cysteine 155, and cysteine 139-cysteine 146. The helical transmembrane segment at 47–68 threads the bilayer; that stretch reads WNLPYGLVFLLVPALALFLLGY. Residues 69–102 lie on the Cytoplasmic side of the membrane; the sequence is VLSARTWRLLTGCCSSARASCGSALRGSLVCTQI. A helical transmembrane segment spans residues 103-127; it reads SAAAALAPLTWVAVALLGGAFYECA. At 128 to 169 the chain is on the extracellular side; it reads ATGSAAFAQRLCLGRNRSCAAELPLVPCNQAKASDVQDLLKD. Residues 170-192 traverse the membrane as a helical segment; that stretch reads LKAQSQVLGWILIAVVIIILLIF. The Cytoplasmic portion of the chain corresponds to 193-315; sequence TSVTRCLSPV…SSGINSTPEL (123 aa).

This sequence belongs to the CALHM family. In terms of assembly, oligomerizes to form decameric and undecameric channels. Post-translationally, N-glycosylated. As to expression, placenta.

The protein resides in the cell membrane. It carries out the reaction ATP(in) = ATP(out). Functionally, pore-forming subunit of an ATP-permeable channel. In response to pathogen-derived and proinflammatory stimuli, relocates from intracellular compartments to NK-dendritic cell and NK-macrophage immune synapses where it mediates ATP efflux and NK cell activation involved in antimicrobial and antitumor responses. May assemble to form gap junction channel-like structures with gating and ion conductance likely regulated by membrane lipids and voltage rather than by extracellular calcium levels. The chain is Calcium homeostasis modulator protein 6 from Homo sapiens (Human).